Here is a 204-residue protein sequence, read N- to C-terminus: Thymidine kinase (204 aa).

Residues 23–30 (GSMFSGKT) and 95–98 (DEAQ) each bind ATP. E96 (proton acceptor) is an active-site residue. Zn(2+)-binding residues include C152, C155, C184, and C187.

The protein belongs to the thymidine kinase family. Homotetramer.

The protein localises to the cytoplasm. It carries out the reaction thymidine + ATP = dTMP + ADP + H(+). This is Thymidine kinase from Porphyromonas gingivalis (strain ATCC 33277 / DSM 20709 / CIP 103683 / JCM 12257 / NCTC 11834 / 2561).